Reading from the N-terminus, the 180-residue chain is Putative methyltransferase YrhH (180 aa).

This sequence belongs to the methyltransferase superfamily.

In Bacillus subtilis (strain 168), this protein is Putative methyltransferase YrhH (yrhH).